Consider the following 561-residue polypeptide: Arginine--tRNA ligase (561 aa).

A 'HIGH' region motif is present at residues 128–138 (ANPTGPLHVGH).

It belongs to the class-I aminoacyl-tRNA synthetase family. Monomer.

The protein localises to the cytoplasm. The enzyme catalyses tRNA(Arg) + L-arginine + ATP = L-arginyl-tRNA(Arg) + AMP + diphosphate. The polypeptide is Arginine--tRNA ligase (Marinobacter nauticus (strain ATCC 700491 / DSM 11845 / VT8) (Marinobacter aquaeolei)).